Here is a 287-residue protein sequence, read N- to C-terminus: MLRVAVPNKGALSEPATEILAEAGYRRRTDPKDLTVVDPVNRVEFFFLRPKDIAIYVGSGDLDFGITGRDLVHDSDASVCERLALGFGSSSFRYAGPAGRDWTTSDLAGKRIATAYSNLVRKDLVAKGIEATVIRLDGAVEISVQLGVADVIADVVGSGRTLSLHDLVAFGEPLCDSEAVLIERGDRGSLDHHETVAARDQLVARVQGVVFGQQYLMLDYDCPRSVLDKATLITSGLESPTIAPLAEPGWVAIRALVPRRDINGIMDELAAIGAKAILASDIRFCRF.

It belongs to the ATP phosphoribosyltransferase family. Long subfamily. In terms of assembly, equilibrium between an active dimeric form, an inactive hexameric form and higher aggregates. Interconversion between the various forms is largely reversible and is influenced by the natural substrates and inhibitors of the enzyme. It depends on Mg(2+) as a cofactor.

The protein localises to the cytoplasm. The enzyme catalyses 1-(5-phospho-beta-D-ribosyl)-ATP + diphosphate = 5-phospho-alpha-D-ribose 1-diphosphate + ATP. The protein operates within amino-acid biosynthesis; L-histidine biosynthesis; L-histidine from 5-phospho-alpha-D-ribose 1-diphosphate: step 1/9. Its activity is regulated as follows. Feedback inhibited by histidine. Its function is as follows. Catalyzes the condensation of ATP and 5-phosphoribose 1-diphosphate to form N'-(5'-phosphoribosyl)-ATP (PR-ATP). Has a crucial role in the pathway because the rate of histidine biosynthesis seems to be controlled primarily by regulation of HisG enzymatic activity. The protein is ATP phosphoribosyltransferase (hisG) of Mycobacterium leprae (strain TN).